The following is a 580-amino-acid chain: Xylulose kinase (580 aa).

Substrate-binding residues include His-99, Arg-170, Asp-280, and Asn-281. ATP-binding positions include Trp-355, 441-442 (GA), and Asn-445.

This sequence belongs to the FGGY kinase family. As to quaternary structure, monomer.

The catalysed reaction is D-xylulose + ATP = D-xylulose 5-phosphate + ADP + H(+). Phosphorylates D-xylulose to produce D-xylulose 5-phosphate, a molecule that may play an important role in the regulation of glucose metabolism and lipogenesis. The polypeptide is Xylulose kinase (XYLB) (Pongo abelii (Sumatran orangutan)).